A 414-amino-acid polypeptide reads, in one-letter code: Thyroid hormone receptor beta-B (414 aa).

A modulating region spans residues 1–59 (MPSSMSVRLFTASAAQRKKIQEGDCCVVLAGKTQGRFILIGAVARVSGYIPSYLDKDEL). 2 consecutive NR C4-type zinc fingers follow at residues 60 to 80 (CVVC…CEGC) and 98 to 122 (CKYE…FKKC). The segment at residues 60-134 (CVVCGDKATG…VGMATDLVLD (75 aa)) is a DNA-binding region (nuclear receptor). One can recognise an NR LBD domain in the interval 170–414 (EEWELIQVVT…PPLFLEVFED (245 aa)).

Belongs to the nuclear hormone receptor family. NR1 subfamily.

The protein localises to the nucleus. In terms of biological role, high affinity receptor for triiodothyronine (T3). In Xenopus laevis (African clawed frog), this protein is Thyroid hormone receptor beta-B (thrb-b).